The following is a 286-amino-acid chain: 2-dehydro-3-deoxyphosphooctonate aldolase (286 aa).

Belongs to the KdsA family.

It is found in the cytoplasm. The enzyme catalyses D-arabinose 5-phosphate + phosphoenolpyruvate + H2O = 3-deoxy-alpha-D-manno-2-octulosonate-8-phosphate + phosphate. The protein operates within carbohydrate biosynthesis; 3-deoxy-D-manno-octulosonate biosynthesis; 3-deoxy-D-manno-octulosonate from D-ribulose 5-phosphate: step 2/3. It functions in the pathway bacterial outer membrane biogenesis; lipopolysaccharide biosynthesis. The polypeptide is 2-dehydro-3-deoxyphosphooctonate aldolase (Bradyrhizobium sp. (strain BTAi1 / ATCC BAA-1182)).